We begin with the raw amino-acid sequence, 802 residues long: Nuclear polyadenylated RNA-binding protein 3 (802 aa).

Disordered regions lie at residues 1 to 174 (MSDE…RRET) and 252 to 293 (ALSV…RMRF). Low complexity predominate over residues 22–34 (SNSNENELMNNSS). A compositionally biased stretch (acidic residues) spans 37 to 73 (DGIEFDAPEEEREAEREEENEEQHELEDVNDEEEEDK). Position 86 is a phosphothreonine (Thr86). 2 stretches are compositionally biased toward acidic residues: residues 101–139 (DDDDDDNEEEEEEEEDDDDDDDDDDDDEEEEEEEEEEGN) and 149–158 (AAEDGEDEED). Over residues 159–174 (KKDKTKDKEVELRRET) the composition is skewed to basic and acidic residues. The span at 260 to 276 (STISTTASASATSGARS) shows a compositional bias: low complexity. Over residues 277–293 (NDQRKPPLSDAQRRMRF) the composition is skewed to basic and acidic residues. Residues 330 to 401 (SRLFIGNLPL…KKLILEVSSS (72 aa)) form the RRM domain. Thr451 carries the post-translational modification Phosphothreonine. Disordered stretches follow at residues 571 to 675 (IYGA…PMDQ) and 717 to 802 (MQGQ…KLQK). Residues 575-590 (PPLPVPNGPAVGPPPQ) are compositionally biased toward pro residues. Residues 593 to 614 (YYQGYSMPPPQQQQQQPYGNYG) are compositionally biased toward low complexity. Positions 632-642 (MNQSYGRYQTS) are enriched in polar residues. Composition is skewed to low complexity over residues 651-661 (QIPQGYGRYQA) and 717-738 (MQGQAPQQQQQQLGGYSSMNSS). A compositionally biased stretch (polar residues) spans 745–754 (TNYNGQNISA). Residues 757–769 (SAPPMSHQPPPPQ) are compositionally biased toward pro residues. Over residues 770–785 (QQQQQQQQQQQQQQQP) the composition is skewed to low complexity.

The protein localises to the nucleus. It is found in the nucleoplasm. Functionally, may be required for packaging pre-mRNAs into ribonucleoprotein structures amenable to efficient nuclear RNA processing. Binds to poly(A)+ RNA. Appears to act in the maintenance of CLN3 mRNA levels. The protein is Nuclear polyadenylated RNA-binding protein 3 (NAB3) of Saccharomyces cerevisiae (strain ATCC 204508 / S288c) (Baker's yeast).